Reading from the N-terminus, the 405-residue chain is Diaminohydroxyphosphoribosylamino-pyrimidine deaminase (405 aa).

In terms of domain architecture, CMP/dCMP-type deaminase spans 256–383; the sequence is YNHEEYMLKA…DLLKKAGIVV (128 aa). His-305 provides a ligand contact to Zn(2+). The active-site Proton donor is the Glu-307. Residues Cys-335 and Cys-345 each contribute to the Zn(2+) site.

Belongs to the cytidine and deoxycytidylate deaminase family. Zn(2+) is required as a cofactor.

It is found in the cytoplasm. The protein localises to the nucleus. It catalyses the reaction 2,5-diamino-6-hydroxy-4-(5-phosphoribosylamino)-pyrimidine + H2O + H(+) = 5-amino-6-(5-phospho-D-ribosylamino)uracil + NH4(+). It functions in the pathway cofactor biosynthesis; riboflavin biosynthesis; 5-amino-6-(D-ribitylamino)uracil from GTP: step 2/4. In terms of biological role, involved in riboflavin biosynthesis. Converts 2,5-diamino-6-(ribosylamino)-4(3H)-pyrimidinone 5'-phosphate into 5-amino-6-(ribosylamino)-2,4(1H,3H)-pyrimidinedione 5'-phosphate. This Schizosaccharomyces pombe (strain 972 / ATCC 24843) (Fission yeast) protein is Diaminohydroxyphosphoribosylamino-pyrimidine deaminase.